The primary structure comprises 982 residues: Little elongation complex subunit 2 (982 aa).

S17 and S326 each carry phosphoserine. Residues 410–427 (TTKVSKSPSPASTSTVPN) are compositionally biased toward polar residues. 2 disordered regions span residues 410–450 (TTKV…PDIS) and 473–504 (GMDG…PLIQ). The span at 479-497 (EECKNKDDQGFESCEKVSN) shows a compositional bias: basic and acidic residues. S571 bears the Phosphoserine mark. At T573 the chain carries Phosphothreonine. 3 disordered regions span residues 595–623 (VGSN…NTAC), 672–697 (ENSK…KSGW), and 930–982 (PKSL…RKIT). Positions 597–610 (SNLSSRPASPNSSS) are enriched in low complexity. Composition is skewed to polar residues over residues 611–623 (GQAS…NTAC) and 672–683 (ENSKQPSVSEQL). The span at 684 to 697 (SGPSDSSSWPKSGW) shows a compositional bias: low complexity. Positions 956 to 970 (SMETKSSCLPAQQVE) are enriched in polar residues.

The protein belongs to the ICE2 family. Component of the little elongation complex (LEC), at least composed of ELL (ELL, ELL2 or ELL3), ZC3H8, ICE1 and ICE2. Interacts with ICE1 (via C-terminus domain). Interacts with ELL. As to expression, expressed at low levels in lung and testis.

Its subcellular location is the nucleus. In terms of biological role, component of the little elongation complex (LEC), a complex required to regulate small nuclear RNA (snRNA) gene transcription by RNA polymerase II and III. The protein is Little elongation complex subunit 2 (ICE2) of Homo sapiens (Human).